Here is a 147-residue protein sequence, read N- to C-terminus: Ubiquitin-conjugating enzyme E2 D1 (147 aa).

One can recognise a UBC core domain in the interval 1–147 (MALKRIQKEL…AREWTQKYAM (147 aa)). Catalysis depends on C85, which acts as the Glycyl thioester intermediate.

Belongs to the ubiquitin-conjugating enzyme family. Component of a E3 ubiquitin ligase complex containing UBE2D1, SIAH1, CACYBP/SIP, SKP1, APC and TBL1X. Interacts with RNF11. Post-translationally, autoubiquitinated.

It localises to the cytoplasm. It catalyses the reaction S-ubiquitinyl-[E1 ubiquitin-activating enzyme]-L-cysteine + [E2 ubiquitin-conjugating enzyme]-L-cysteine = [E1 ubiquitin-activating enzyme]-L-cysteine + S-ubiquitinyl-[E2 ubiquitin-conjugating enzyme]-L-cysteine.. It carries out the reaction S-ubiquitinyl-[E1 ubiquitin-activating enzyme]-L-cysteine + [acceptor protein]-L-lysine = [E1 ubiquitin-activating enzyme]-L-cysteine + N(6)-monoubiquitinyl-[acceptor protein]-L-lysine.. The protein operates within protein modification; protein ubiquitination. Functionally, accepts ubiquitin from the E1 complex and catalyzes its covalent attachment to other proteins. In vitro catalyzes 'Lys-48'-linked polyubiquitination. Mediates the selective degradation of short-lived and abnormal proteins. Functions in the E6/E6-AP-induced ubiquitination of p53/TP53. Mediates ubiquitination of PEX5 and auto-ubiquitination of STUB1, TRAF6 and TRIM63/MURF1. Ubiquitinates STUB1-associated HSP90AB1 in vitro. Lacks inherent specificity for any particular lysine residue of ubiquitin. Essential for viral activation of IRF3. Mediates polyubiquitination of CYP3A4. In Bos taurus (Bovine), this protein is Ubiquitin-conjugating enzyme E2 D1 (UBE2D1).